A 350-amino-acid chain; its full sequence is Histidinol-phosphate aminotransferase 1 (350 aa).

Position 209 is an N6-(pyridoxal phosphate)lysine (Lys-209).

It belongs to the class-II pyridoxal-phosphate-dependent aminotransferase family. Histidinol-phosphate aminotransferase subfamily. Homodimer. It depends on pyridoxal 5'-phosphate as a cofactor.

It catalyses the reaction L-histidinol phosphate + 2-oxoglutarate = 3-(imidazol-4-yl)-2-oxopropyl phosphate + L-glutamate. It functions in the pathway amino-acid biosynthesis; L-histidine biosynthesis; L-histidine from 5-phospho-alpha-D-ribose 1-diphosphate: step 7/9. The sequence is that of Histidinol-phosphate aminotransferase 1 (hisC1) from Bradyrhizobium diazoefficiens (strain JCM 10833 / BCRC 13528 / IAM 13628 / NBRC 14792 / USDA 110).